Here is a 431-residue protein sequence, read N- to C-terminus: Acrosin (431 aa).

The N-terminal stretch at 1 to 16 is a signal peptide; it reads MLPTAVLLVLVVSVVA. An N-linked (GlcNAc...) asparagine glycan is attached at asparagine 19. Intrachain disulfides connect cysteine 22/cysteine 152, cysteine 26/cysteine 160, cysteine 71/cysteine 87, cysteine 175/cysteine 244, cysteine 207/cysteine 223, and cysteine 234/cysteine 264. The region spanning 40-288 is the Peptidase S1 domain; the sequence is VVGGQAAQQG…FLDWIASRIG (249 aa). Active-site charge relay system residues include histidine 86 and aspartate 140. Residue asparagine 208 is glycosylated (N-linked (GlcNAc...) asparagine). Serine 238 (charge relay system) is an active-site residue. A disordered region spans residues 295–385; sequence IQPATPTPPT…PPPASTKPPQ (91 aa). A compositionally biased stretch (basic residues) spans 331-341; sequence PHPHPHPHPHP. The segment covering 342-381 has biased composition (pro residues); sequence RPPQPPAAQAPPPPPPPPPPPPPPPPPPPPPPPPPPPAST. Residues 351 to 431 constitute a propeptide, pro-rich; that stretch reads APPPPPPPPP…TEIPEVTLAS (81 aa).

This sequence belongs to the peptidase S1 family. As to quaternary structure, heavy chain (catalytic) and a light chain linked by two disulfide bonds. Forms a heterodimer with SERPINA5.

The enzyme catalyses Preferential cleavage: Arg-|-Xaa, Lys-|-Xaa.. With respect to regulation, inhibited by SERPINA5. In terms of biological role, acrosin is the major protease of mammalian spermatozoa. It is a serine protease of trypsin-like cleavage specificity, it is synthesized in a zymogen form, proacrosin and stored in the acrosome. In Oryctolagus cuniculus (Rabbit), this protein is Acrosin (ACR).